We begin with the raw amino-acid sequence, 706 residues long: Polycomb protein SCMH1 (706 aa).

MBT repeat units follow at residues 28–126 (FTWD…LQPP) and 134–235 (SSWP…LQPP). Disordered regions lie at residues 233-350 (QPPG…TVPS) and 576-595 (GSDRHLESRDPPRLSGRDPS). Basic residues-rich tracts occupy residues 272 to 283 (RGRKPGKKRGRT) and 304 to 319 (FPKKRGPKPGSKRKPR). The segment covering 329-340 (PTTSTPEPDTST) has biased composition (low complexity). The span at 576–591 (GSDRHLESRDPPRLSG) shows a compositional bias: basic and acidic residues. In terms of domain architecture, SAM spans 597–662 (WTVEDVMQFV…SFHIDRLKQV (66 aa)).

Belongs to the SCM family. As to quaternary structure, associates with a PRC1-like complex. Interacts with the SAM domain of PHC1 via its SAM domain in vitro. In terms of tissue distribution, most abundant in testis. Moderate levels detected in heart, brain, lung, liver, skeletal muscle and kidney and lower levels in spleen.

It is found in the nucleus. Associates with Polycomb group (PcG) multiprotein complexes; the complex class is required to maintain the transcriptionally repressive state of some genes. This Mus musculus (Mouse) protein is Polycomb protein SCMH1.